The sequence spans 301 residues: Protoheme IX farnesyltransferase 1 (301 aa).

Transmembrane regions (helical) follow at residues Val-29 to Val-49, Val-51 to Leu-71, Ala-101 to Asn-121, Leu-123 to Leu-143, Asn-150 to Thr-170, Ala-177 to Ile-197, Cys-223 to Met-243, Cys-244 to Trp-264, and Leu-274 to Leu-294.

Belongs to the UbiA prenyltransferase family. Protoheme IX farnesyltransferase subfamily.

It is found in the cell inner membrane. The enzyme catalyses heme b + (2E,6E)-farnesyl diphosphate + H2O = Fe(II)-heme o + diphosphate. It functions in the pathway porphyrin-containing compound metabolism; heme O biosynthesis; heme O from protoheme: step 1/1. Converts heme B (protoheme IX) to heme O by substitution of the vinyl group on carbon 2 of heme B porphyrin ring with a hydroxyethyl farnesyl side group. The polypeptide is Protoheme IX farnesyltransferase 1 (Shewanella baltica (strain OS195)).